The following is a 128-amino-acid chain: Lymphocyte antigen 6 complex locus protein G5c (128 aa).

The N-terminal stretch at 1–29 (MGAEYGCLPSTSQALYVILLIVLVRMSLV) is a signal peptide. In terms of domain architecture, UPAR/Ly6 spans 37–128 (LRCYRCLLET…NPQNRVFYIP (92 aa)). Cystine bridges form between Cys39-Cys66, Cys42-Cys51, Cys58-Cys85, Cys94-Cys111, and Cys112-Cys117. The N-linked (GlcNAc...) asparagine glycan is linked to Asn73.

In terms of assembly, forms oligomers. In terms of processing, N-glycosylated. Abundantly expressed in the epididymis.

It is found in the secreted. Its function is as follows. May have a role in hematopoietic cell differentiation. The sequence is that of Lymphocyte antigen 6 complex locus protein G5c (LY6G5C) from Canis lupus familiaris (Dog).